Here is a 137-residue protein sequence, read N- to C-terminus: Large ribosomal subunit protein uL16 (137 aa).

It belongs to the universal ribosomal protein uL16 family. Part of the 50S ribosomal subunit.

Binds 23S rRNA and is also seen to make contacts with the A and possibly P site tRNAs. In Mycoplasma capricolum subsp. capricolum (strain California kid / ATCC 27343 / NCTC 10154), this protein is Large ribosomal subunit protein uL16.